Consider the following 591-residue polypeptide: Pyruvate kinase 2 (591 aa).

Position 38 (Arg-38) interacts with substrate. 3 residues coordinate K(+): Asn-40, Ser-42, and Asp-72. 40-43 serves as a coordination point for ATP; that stretch reads NFSH. Positions 79 and 164 each coordinate ATP. Residue Glu-229 participates in Mg(2+) binding. Residues Gly-252, Asp-253, and Thr-285 each contribute to the substrate site. Residue Asp-253 coordinates Mg(2+).

This sequence belongs to the pyruvate kinase family. It in the C-terminal section; belongs to the PEP-utilizing enzyme family. As to quaternary structure, homotetramer. The cofactor is Mg(2+). K(+) is required as a cofactor.

The catalysed reaction is pyruvate + ATP = phosphoenolpyruvate + ADP + H(+). It functions in the pathway carbohydrate degradation; glycolysis; pyruvate from D-glyceraldehyde 3-phosphate: step 5/5. In Synechocystis sp. (strain ATCC 27184 / PCC 6803 / Kazusa), this protein is Pyruvate kinase 2 (pyk2).